The primary structure comprises 436 residues: tRNA(Ile)-lysidine synthase (436 aa).

27–32 (SGGVDS) contacts ATP.

It belongs to the tRNA(Ile)-lysidine synthase family.

Its subcellular location is the cytoplasm. The catalysed reaction is cytidine(34) in tRNA(Ile2) + L-lysine + ATP = lysidine(34) in tRNA(Ile2) + AMP + diphosphate + H(+). Its function is as follows. Ligates lysine onto the cytidine present at position 34 of the AUA codon-specific tRNA(Ile) that contains the anticodon CAU, in an ATP-dependent manner. Cytidine is converted to lysidine, thus changing the amino acid specificity of the tRNA from methionine to isoleucine. This is tRNA(Ile)-lysidine synthase from Vibrio vulnificus (strain YJ016).